A 458-amino-acid polypeptide reads, in one-letter code: Exodeoxyribonuclease 7 large subunit (458 aa).

The protein belongs to the XseA family. As to quaternary structure, heterooligomer composed of large and small subunits.

The protein localises to the cytoplasm. The enzyme catalyses Exonucleolytic cleavage in either 5'- to 3'- or 3'- to 5'-direction to yield nucleoside 5'-phosphates.. Functionally, bidirectionally degrades single-stranded DNA into large acid-insoluble oligonucleotides, which are then degraded further into small acid-soluble oligonucleotides. This Serratia proteamaculans (strain 568) protein is Exodeoxyribonuclease 7 large subunit.